Reading from the N-terminus, the 295-residue chain is Sulfotransferase 1 family member D1 (295 aa).

48 to 53 (KSGTTW) lines the 3'-phosphoadenylyl sulfate pocket. Substrate contacts are provided by residues Phe81 and 106–108 (KTH). His108 acts as the Proton acceptor in catalysis. The 3'-phosphoadenylyl sulfate site is built by Arg130 and Ser138. Phe142 serves as a coordination point for substrate. Residues Tyr193, Ser227, and 257–259 (RKG) each bind 3'-phosphoadenylyl sulfate.

The protein belongs to the sulfotransferase 1 family.

It localises to the cytoplasm. In terms of biological role, sulfotransferase with broad substrate specificity that utilizes 3'-phospho-5'-adenylyl sulfate (PAPS) as sulfonate donor to catalyze the sulfate conjugation of catecholamines, such as dopamine, prostaglandins, leukotriene E4, drugs and xenobiotic compounds. Has sulfotransferase activity towards p-nitrophenol, 2-naphthylamine and minoxidil (in vitro). Sulfonation increases the water solubility of most compounds, and therefore their renal excretion, but it can also result in bioactivation to form active metabolites. This is Sulfotransferase 1 family member D1 (Sult1d1) from Rattus norvegicus (Rat).